We begin with the raw amino-acid sequence, 87 residues long: UPF0367 protein Pro_0144 (87 aa).

The protein belongs to the UPF0367 family.

This is UPF0367 protein Pro_0144 from Prochlorococcus marinus (strain SARG / CCMP1375 / SS120).